The following is a 506-amino-acid chain: Transcriptional coactivator YAP1 (506 aa).

The segment covering M1–P38 has biased composition (pro residues). Residues M1–S60 form a disordered region. A compositionally biased stretch (low complexity) spans G39–G50. S60 carries the post-translational modification Phosphoserine. Phosphothreonine is present on T62. The tract at residues L90–G112 is disordered. 2 positions are modified to phosphoserine: S104 and S108. 2 positions are modified to phosphothreonine: T109 and T118. Residues S126, S127, S130, and S137 each carry the phosphoserine modification. The tract at residues Q132 to R160 is disordered. Positions S147–A156 are enriched in low complexity. Phosphoserine is present on S163. WW domains lie at V170–A204 and P230–D263. Phosphoserine is present on residues S273, S288, S369, S373, S384, S390, S399, S402, and S405. Disordered regions lie at residues Q274–Q307 and T356–D416. A compositionally biased stretch (pro residues) spans K279–P289. The transactivation domain stretch occupies residues P290–L506. The segment covering G371–Y393 has biased composition (polar residues). The segment covering D401–V411 has biased composition (polar residues). Y409 carries the post-translational modification Phosphotyrosine. A Phosphothreonine modification is found at T414.

This sequence belongs to the YAP1 family. Binds to the SH3 domain of the YES kinase. Binds to WBP1 and WBP2. Binds, in vitro, through the WW1 domain, to neural isoforms of ENAH that contain the PPSY motif. The phosphorylated form interacts with YWHAB. Interacts (via WW domains) with LATS1 (via PPxY motif 2). Interacts with LATS2. Interacts with TEAD1, TEAD2 and TEAD3. Interacts wih TEAD4. Interacts with TP73. Interacts with RUNX1. Interacts with HCK. Interacts (via WW domains) with PTPN14 (via PPxY motif 2); this interaction leads to the cytoplasmic sequestration of YAP1 and inhibits its transcriptional coactivator activity. Interacts (when phosphorylated at Ser-112) with SMAD2, SMAD3 and WWTR1. Interacts with PRRG2 (via cytoplasmic domain). Interacts (via WW domains) with PRRG4 (via cytoplasmic domain). Interacts (phosphorylated) with CLDN18; the interaction sequesters YAP1 away from the nucleus and thereby restricts transcription of YAP1 target genes. Interacts with SMAD1. Interacts with AMOT; the interaction facilitates translocation of YAP1 to the cytoplasm and tight junctions. Interacts with AMOTL2, the interaction is required for ubiquitination of AMOTL2 and localization of YAP1 to tight junctions. Phosphorylated by LATS1 and LATS2; leading to cytoplasmic translocation and inactivation. Phosphorylated by ABL1; leading to YAP1 stabilization, enhanced interaction with TP73 and recruitment onto proapoptotic genes; in response to DNA damage. Phosphorylation at Ser-402 and Ser-405 by CK1 is triggered by previous phosphorylation at Ser-399 by LATS proteins and leads to YAP1 ubiquitination by SCF(beta-TRCP) E3 ubiquitin ligase and subsequent degradation. Phosphorylated at Thr-118, Ser-137, Ser-369 and Thr-414 by MAPK8/JNK1 and MAPK9/JNK2, which is required for the regulation of apoptosis by YAP1. Phosphorylated in the nucleus by PRP4K; phosphorylation leads to nuclear exclusion. In terms of processing, ubiquitinated by SCF(beta-TRCP) E3 ubiquitin ligase.

Its subcellular location is the cytoplasm. It is found in the nucleus. The protein localises to the cell junction. The protein resides in the tight junction. Transcriptional regulator with dual roles as a coactivator and corepressor. Critical downstream regulatory target in the Hippo signaling pathway, crucial for organ size control and tumor suppression by restricting proliferation and promoting apoptosis. The Hippo signaling pathway core involves a kinase cascade featuring STK3/MST2 and STK4/MST1, along with its regulatory partner SAV1, which phosphorylates and activates LATS1/2 in complex with their regulatory protein, MOB1. This activation leads to the phosphorylation and inactivation of the YAP1 oncoprotein and WWTR1/TAZ. Phosphorylation of YAP1 by LATS1/2 prevents its nuclear translocation, thereby regulating the expression of its target genes. The transcriptional regulation of gene expression requires TEAD transcription factors and modulates cell growth, anchorage-independent growth, and induction of epithelial-mesenchymal transition (EMT). Plays a key role in tissue tension and 3D tissue shape by regulating the cortical actomyosin network, acting via ARHGAP18, a Rho GTPase activating protein that suppresses F-actin polymerization. It also suppresses ciliogenesis by acting as a transcriptional corepressor of TEAD4 target genes AURKA and PLK1. In conjunction with WWTR1, regulates TGFB1-dependent SMAD2 and SMAD3 nuclear accumulation. Synergizes with WBP2 to enhance PGR activity. The protein is Transcriptional coactivator YAP1 (YAP1) of Canis lupus familiaris (Dog).